The following is a 93-amino-acid chain: Small ribosomal subunit protein uS19 (93 aa).

Residues 73 to 93 (EFSPTRTYRGHDKKDKKIQKK) are disordered.

This sequence belongs to the universal ribosomal protein uS19 family.

Its function is as follows. Protein S19 forms a complex with S13 that binds strongly to the 16S ribosomal RNA. The chain is Small ribosomal subunit protein uS19 from Phytoplasma mali (strain AT).